Here is a 297-residue protein sequence, read N- to C-terminus: PIH1 domain-containing protein 1 (297 aa).

The protein belongs to the PIH1 family.

It is found in the nucleus. Functionally, involved in the assembly of C/D box small nucleolar ribonucleoprotein (snoRNP) particles. Recruits the SWI/SNF complex to the core promoter of rRNA genes and enhances pre-rRNA transcription. Mediates interaction of TELO2 with the R2TP complex which is necessary for the stability of MTOR and SMG1. Positively regulates the assembly and activity of the mTORC1 complex. This chain is PIH1 domain-containing protein 1 (pih1d1), found in Xenopus laevis (African clawed frog).